Consider the following 410-residue polypeptide: Serine hydroxymethyltransferase (410 aa).

(6S)-5,6,7,8-tetrahydrofolate contacts are provided by residues leucine 116 and 120 to 122; that span reads GHL. Lysine 225 carries the post-translational modification N6-(pyridoxal phosphate)lysine. 349-351 provides a ligand contact to (6S)-5,6,7,8-tetrahydrofolate; sequence SPF.

This sequence belongs to the SHMT family. In terms of assembly, homodimer. The cofactor is pyridoxal 5'-phosphate.

It localises to the cytoplasm. The enzyme catalyses (6R)-5,10-methylene-5,6,7,8-tetrahydrofolate + glycine + H2O = (6S)-5,6,7,8-tetrahydrofolate + L-serine. The protein operates within one-carbon metabolism; tetrahydrofolate interconversion. Its pathway is amino-acid biosynthesis; glycine biosynthesis; glycine from L-serine: step 1/1. Its function is as follows. Catalyzes the reversible interconversion of serine and glycine with tetrahydrofolate (THF) serving as the one-carbon carrier. This reaction serves as the major source of one-carbon groups required for the biosynthesis of purines, thymidylate, methionine, and other important biomolecules. Also exhibits THF-independent aldolase activity toward beta-hydroxyamino acids, producing glycine and aldehydes, via a retro-aldol mechanism. This Leuconostoc mesenteroides subsp. mesenteroides (strain ATCC 8293 / DSM 20343 / BCRC 11652 / CCM 1803 / JCM 6124 / NCDO 523 / NBRC 100496 / NCIMB 8023 / NCTC 12954 / NRRL B-1118 / 37Y) protein is Serine hydroxymethyltransferase.